Reading from the N-terminus, the 95-residue chain is Cliotide T5 (95 aa).

A cross-link (cyclopeptide (Gly-Asn)) is located at residues 1-30 (GIPCGESCVFIPCISTVIGCSCKNKVCYRN). 3 disulfides stabilise this stretch: cysteine 4/cysteine 20, cysteine 8/cysteine 22, and cysteine 13/cysteine 27. A propeptide spans 31–95 (HVIAAEAKTM…KDHLKMSITN (65 aa)) (removed in mature form).

In terms of processing, contains 3 disulfide bonds. Post-translationally, this is a cyclic peptide. Expressed in stem, shoot, root, leaf, pod and nodule but not in flower and seed (at protein level).

Probably participates in a plant defense mechanism. The polypeptide is Cliotide T5 (Clitoria ternatea (Butterfly pea)).